The primary structure comprises 262 residues: L-aspartate dehydrogenase (262 aa).

NAD(+)-binding residues include A128 and N183. H213 is an active-site residue.

Belongs to the L-aspartate dehydrogenase family.

It catalyses the reaction L-aspartate + NADP(+) + H2O = oxaloacetate + NH4(+) + NADPH + H(+). The catalysed reaction is L-aspartate + NAD(+) + H2O = oxaloacetate + NH4(+) + NADH + H(+). The protein operates within cofactor biosynthesis; NAD(+) biosynthesis; iminoaspartate from L-aspartate (dehydrogenase route): step 1/1. Specifically catalyzes the NAD or NADP-dependent dehydrogenation of L-aspartate to iminoaspartate. The chain is L-aspartate dehydrogenase from Methanopyrus kandleri (strain AV19 / DSM 6324 / JCM 9639 / NBRC 100938).